A 189-amino-acid polypeptide reads, in one-letter code: Ribosome maturation factor RimM (189 aa).

A PRC barrel domain is found at 110–189 (DDEYYWKDLI…TVTVDWDPNF (80 aa)).

Belongs to the RimM family. As to quaternary structure, binds ribosomal protein uS19.

The protein localises to the cytoplasm. An accessory protein needed during the final step in the assembly of 30S ribosomal subunit, possibly for assembly of the head region. Essential for efficient processing of 16S rRNA. May be needed both before and after RbfA during the maturation of 16S rRNA. It has affinity for free ribosomal 30S subunits but not for 70S ribosomes. In Blochmanniella pennsylvanica (strain BPEN), this protein is Ribosome maturation factor RimM.